A 687-amino-acid polypeptide reads, in one-letter code: Protein 4.2 (687 aa).

Glycine 2 is lipidated: N-myristoyl glycine. Residues 31-39 are band 3 binding; that stretch reads LFVRRGQPF. Serine 247 carries the post-translational modification Phosphoserine.

The protein belongs to the transglutaminase superfamily. Transglutaminase family. As to quaternary structure, component of the ankyrin-1 complex in the erythrocyte, composed of ANK1, RHCE, RHAG, SLC4A1, EPB42, GYPA, GYPB and AQP1. Interacts with SLC4A1 (via the cytoplasmic domain); this interaction is mediated by the SLC4A1 Band 3-I dimer. Interacts with ANK1 (via ANK 1-13 repeats). Interacts with AQP1 (via the C-terminal).

It localises to the cell membrane. The protein localises to the cytoplasm. It is found in the cytoskeleton. In terms of biological role, component of the ankyrin-1 complex, a multiprotein complex involved in the stability and shape of the erythrocyte membrane. This Bos taurus (Bovine) protein is Protein 4.2.